A 199-amino-acid chain; its full sequence is uncharacterized protein (199 aa).

One can recognise a Nudix hydrolase domain in the interval 38–169 (NRRAAVLIPI…SLDIHREGIN (132 aa)). The Nudix box motif lies at 76 to 98 (GKADPDDQSLISTALREAEEEVA). Positions 92 and 96 each coordinate Mg(2+).

This sequence belongs to the Nudix hydrolase family. PCD1 subfamily. The cofactor is Mn(2+). Mg(2+) is required as a cofactor.

Its function is as follows. Probably mediates the hydrolysis of some nucleoside diphosphate derivatives. This is an uncharacterized protein from Yersinia pseudotuberculosis serotype I (strain IP32953).